The following is a 901-amino-acid chain: Aconitate hydratase A (901 aa).

Residues Cys443, Cys509, and Cys512 each coordinate [4Fe-4S] cluster.

It belongs to the aconitase/IPM isomerase family. In terms of assembly, monomer. [4Fe-4S] cluster is required as a cofactor.

The catalysed reaction is citrate = D-threo-isocitrate. The enzyme catalyses (2S,3R)-3-hydroxybutane-1,2,3-tricarboxylate = 2-methyl-cis-aconitate + H2O. The protein operates within carbohydrate metabolism; tricarboxylic acid cycle; isocitrate from oxaloacetate: step 2/2. It participates in organic acid metabolism; propanoate degradation. Functionally, involved in the catabolism of short chain fatty acids (SCFA) via the tricarboxylic acid (TCA)(acetyl degradation route) and probably the 2-methylcitrate cycle I (propionate degradation route). Catalyzes the reversible isomerization of citrate to isocitrate via cis-aconitate. Could catalyze the hydration of 2-methyl-cis-aconitate to yield (2R,3S)-2-methylisocitrate. The apo form of AcnA functions as a RNA-binding regulatory protein. The chain is Aconitate hydratase A (acnA) from Staphylococcus aureus (strain MRSA252).